Here is a 1220-residue protein sequence, read N- to C-terminus: von Willebrand factor A domain-containing protein 5B1 (1220 aa).

An N-terminal signal peptide occupies residues 1–18 (MPGLLNWITGAALPLTAS). In terms of domain architecture, VIT spans 19-149 (DVTSCVSGYA…NVTIFISTSS (131 aa)). The N-linked (GlcNAc...) asparagine glycan is linked to N140. One can recognise a VWFA domain in the interval 361-529 (EFIFLIDRSS…RLQPKMVKSL (169 aa)). An N-linked (GlcNAc...) asparagine glycan is attached at N650. The segment at 715–807 (NSGQDLNQGP…SPSRPATPAP (93 aa)) is disordered. Over residues 757–774 (VRERTSDSRSPGDLEPSH) the composition is skewed to basic and acidic residues. Over residues 796 to 807 (RASPSRPATPAP) the composition is skewed to low complexity. Y881 carries the phosphotyrosine modification. 2 disordered regions span residues 937–962 (RGTS…GKFQ) and 976–995 (EARS…QRSL). N1017 is a glycosylation site (N-linked (GlcNAc...) asparagine). The span at 1093-1111 (TTRPSESKTPSPQLCTSSP) shows a compositional bias: polar residues. Residues 1093–1115 (TTRPSESKTPSPQLCTSSPPRHP) form a disordered region.

Its subcellular location is the secreted. This chain is von Willebrand factor A domain-containing protein 5B1 (VWA5B1), found in Homo sapiens (Human).